The chain runs to 1381 residues: Hepatocyte growth factor receptor (1381 aa).

Residues 1-24 (MKAPAVLAPGILVLLFTLVQRSNG) form the signal peptide. The Extracellular portion of the chain corresponds to 25–932 (ECKEALAKSE…VIVQPDQNFT (908 aa)). The Sema domain occupies 27–515 (KEALAKSEMN…TGKKITKIPL (489 aa)). N-linked (GlcNAc...) asparagine glycosylation occurs at Asn45. Cystine bridges form between Cys95-Cys101, Cys98-Cys160, Cys133-Cys141, and Cys172-Cys175. Asn106 carries an N-linked (GlcNAc...) asparagine glycan. A glycan (N-linked (GlcNAc...) asparagine) is linked at Asn149. Residue Asn202 is glycosylated (N-linked (GlcNAc...) asparagine). Cystine bridges form between Cys298/Cys363 and Cys385/Cys397. N-linked (GlcNAc...) asparagine glycosylation is found at Asn399 and Asn405. Intrachain disulfides connect Cys520–Cys538, Cys526–Cys561, Cys529–Cys545, and Cys541–Cys551. IPT/TIG domains lie at 563–655 (PAIY…FSYV), 657–739 (PIIT…FSYR), and 742–836 (PIVY…LIYV). Thr582 carries O-linked (Man) threonine glycosylation. Asn607 and Asn635 each carry an N-linked (GlcNAc...) asparagine glycan. Thr676 and Thr761 each carry an O-linked (Man) threonine glycan. Asn785, Asn879, and Asn930 each carry an N-linked (GlcNAc...) asparagine glycan. The helical transmembrane segment at 933 to 955 (GLIAGVVSISIALLLLLGLFLWL) threads the bilayer. Over 956–1381 (KKRKQIKDLG…EDNADDEVDT (426 aa)) the chain is Cytoplasmic. Phosphoserine is present on Ser966. At Thr977 the chain carries Phosphothreonine. Residues Ser990, Ser997, and Ser1000 each carry the phosphoserine modification. Phosphotyrosine is present on Tyr1003. The 268-residue stretch at 1078–1345 (VHFNEVIGRG…RISAIFSTFI (268 aa)) folds into the Protein kinase domain. ATP is bound by residues 1084 to 1092 (IGRGHFGCV) and Lys1110. Asp1204 (proton acceptor) is an active-site residue. The interval 1212–1381 (LDEKFTVKVA…EDNADDEVDT (170 aa)) is interaction with RANBP9. Phosphotyrosine is present on Tyr1230. Tyr1234 and Tyr1235 each carry phosphotyrosine; by autocatalysis. At Thr1289 the chain carries Phosphothreonine. The segment at 1320-1359 (WHPKAEMRPSFSELVSRISAIFSTFIGEHYVHVNATYVNV) is interaction with MUC20. A phosphotyrosine; by autocatalysis mark is found at Tyr1349 and Tyr1356. Tyr1365 bears the Phosphotyrosine mark.

The protein belongs to the protein kinase superfamily. Tyr protein kinase family. Heterodimer made of an alpha chain (50 kDa) and a beta chain (145 kDa) which are disulfide linked. Binds PLXNB1. Interacts when phosphorylated with downstream effectors including STAT3, PIK3R1, SRC, PCLG1, GRB2 and GAB1. Interacts with SPSB1, SPSB2 and SPSB4. Interacts with INPP5D/SHIP1. When phosphorylated at Tyr-1356, interacts with INPPL1/SHIP2. Interacts with RANBP9 and RANBP10, as well as SPSB1, SPSB2, SPSB3 and SPSB4. SPSB1 binding occurs in the presence and in the absence of HGF, however HGF treatment has a positive effect on this interaction. Interacts with MUC20; prevents interaction with GRB2 and suppresses hepatocyte growth factor-induced cell proliferation. Interacts with GRB10. Interacts with PTPN1 and PTPN2. Interacts with HSP90AA1 and HSP90AB1; the interaction suppresses MET kinase activity. Interacts with tensin TNS3. Interacts (when phosphorylated) with tensin TNS4 (via SH2 domain); the interaction increases MET protein stability by inhibiting MET endocytosis and subsequent lysosomal degradation. Autophosphorylated in response to ligand binding on Tyr-1234 and Tyr-1235 in the kinase domain leading to further phosphorylation of Tyr-1349 and Tyr-1356 in the C-terminal multifunctional docking site. Dephosphorylated by PTPRJ at Tyr-1349 and Tyr-1365. Dephosphorylated by PTPN1 and PTPN2. Post-translationally, ubiquitinated. Ubiquitination by CBL regulates the receptor stability and activity through proteasomal degradation. In terms of processing, O-mannosylation of IPT/TIG domains by TMEM260 is required for protein maturation. O-mannosylated residues are composed of single mannose glycans that are not elongated or modified.

It is found in the membrane. It carries out the reaction L-tyrosyl-[protein] + ATP = O-phospho-L-tyrosyl-[protein] + ADP + H(+). Its activity is regulated as follows. In its inactive state, the C-terminal tail interacts with the catalytic domain and inhibits the kinase activity. Upon ligand binding, the C-terminal tail is displaced and becomes phosphorylated, thus increasing the kinase activity. In terms of biological role, receptor tyrosine kinase that transduces signals from the extracellular matrix into the cytoplasm by binding to hepatocyte growth factor/HGF ligand. Regulates many physiological processes including proliferation, scattering, morphogenesis and survival. Ligand binding at the cell surface induces autophosphorylation of MET on its intracellular domain that provides docking sites for downstream signaling molecules. Following activation by ligand, interacts with the PI3-kinase subunit PIK3R1, PLCG1, SRC, GRB2, STAT3 or the adapter GAB1. Recruitment of these downstream effectors by MET leads to the activation of several signaling cascades including the RAS-ERK, PI3 kinase-AKT, or PLCgamma-PKC. The RAS-ERK activation is associated with the morphogenetic effects while PI3K/AKT coordinates prosurvival effects. During embryonic development, MET signaling plays a role in gastrulation, development and migration of muscles and neuronal precursors, angiogenesis and kidney formation. In adults, participates in wound healing as well as organ regeneration and tissue remodeling. Also promotes differentiation and proliferation of hematopoietic cells. The chain is Hepatocyte growth factor receptor (MET) from Colobus guereza (Mantled guereza).